A 394-amino-acid chain; its full sequence is Hemagglutinin-esterase (394 aa).

Residues 1–16 (MARFIILFLLLAPVYS) form the signal peptide. Over 17–347 (RLCLRNHPDT…NNRVDAIPPQ (331 aa)) the chain is Extracellular. The active site involves Ser32. The Cell attachment site signature appears at 119 to 121 (RGD). Residues Asp261 and His264 contribute to the active site. Asn333 is a glycosylation site (N-linked (GlcNAc...) asparagine; by host). A highly polymorphic region region spans residues 335 to 358 (TDVNNRVDAIPPQLSNIFISMGVA). The chain crosses the membrane as a helical span at residues 348 to 368 (LSNIFISMGVAGFGIALFLAG). The Cytoplasmic segment spans residues 369 to 394 (WKACVWIAAFMYKSRGRNPPANLSVA).

It is found in the host membrane. Its subcellular location is the virion membrane. The enzyme catalyses N-acetyl-9-O-acetylneuraminate + H2O = N-acetylneuraminate + acetate + H(+). It catalyses the reaction N-acetyl-4-O-acetylneuraminate + H2O = N-acetylneuraminate + acetate + H(+). Its function is as follows. Performs attachment to host receptor thereby inducing virus particle entry into target cell. Binds specifically to 5-N-acetyl-4-O-acetyl neuraminic acid on host cells, which plays a major role in cell tropism of the virus. ALso mediates de-O-acetylation of N-acetyl-4-O-acetylneuraminic acid. This receptor-destroying activity is important for virus release as it probably helps preventing self-aggregation and ensures the efficient spread of the progeny virus from cell to cell. The highly polymorphic region (HPR) modulates the virulence in host. Catalyzes the removal of terminal sialic acid residues from viral and cellular glycoconjugates. The polypeptide is Hemagglutinin-esterase (Gadus morhua (Atlantic cod)).